Reading from the N-terminus, the 149-residue chain is SsrA-binding protein (149 aa).

Belongs to the SmpB family.

The protein resides in the cytoplasm. Functionally, required for rescue of stalled ribosomes mediated by trans-translation. Binds to transfer-messenger RNA (tmRNA), required for stable association of tmRNA with ribosomes. tmRNA and SmpB together mimic tRNA shape, replacing the anticodon stem-loop with SmpB. tmRNA is encoded by the ssrA gene; the 2 termini fold to resemble tRNA(Ala) and it encodes a 'tag peptide', a short internal open reading frame. During trans-translation Ala-aminoacylated tmRNA acts like a tRNA, entering the A-site of stalled ribosomes, displacing the stalled mRNA. The ribosome then switches to translate the ORF on the tmRNA; the nascent peptide is terminated with the 'tag peptide' encoded by the tmRNA and targeted for degradation. The ribosome is freed to recommence translation, which seems to be the essential function of trans-translation. In Acholeplasma laidlawii (strain PG-8A), this protein is SsrA-binding protein.